Reading from the N-terminus, the 352-residue chain is tRNA pseudouridine synthase D (352 aa).

Catalysis depends on D81, which acts as the Nucleophile. Residues G157–L303 form the TRUD domain.

It belongs to the pseudouridine synthase TruD family.

It catalyses the reaction uridine(13) in tRNA = pseudouridine(13) in tRNA. Responsible for synthesis of pseudouridine from uracil-13 in transfer RNAs. The sequence is that of tRNA pseudouridine synthase D from Azotobacter vinelandii (strain DJ / ATCC BAA-1303).